Here is a 299-residue protein sequence, read N- to C-terminus: Acetylglutamate kinase (299 aa).

Residues 70–71 (GG), arginine 92, and asparagine 186 contribute to the substrate site.

The protein belongs to the acetylglutamate kinase family. ArgB subfamily.

It is found in the cytoplasm. The catalysed reaction is N-acetyl-L-glutamate + ATP = N-acetyl-L-glutamyl 5-phosphate + ADP. It functions in the pathway amino-acid biosynthesis; L-arginine biosynthesis; N(2)-acetyl-L-ornithine from L-glutamate: step 2/4. Functionally, catalyzes the ATP-dependent phosphorylation of N-acetyl-L-glutamate. This chain is Acetylglutamate kinase, found in Caldanaerobacter subterraneus subsp. tengcongensis (strain DSM 15242 / JCM 11007 / NBRC 100824 / MB4) (Thermoanaerobacter tengcongensis).